The chain runs to 309 residues: Aurora kinase C (309 aa).

The disordered stretch occupies residues 1–33 (MSSPRAVVQLGKAQPAGEELATANQTAQQPSSP). Residues 22-32 (TANQTAQQPSS) show a composition bias toward polar residues. The region spanning 43 to 293 (FEIGRPLGKG…LAQILKHPWV (251 aa)) is the Protein kinase domain. ATP-binding positions include 49–57 (LGKGKFGNV) and K72. Residue D166 is the Proton acceptor of the active site. T198 carries the phosphothreonine; by PKA modification. The interaction with BIRC5 stretch occupies residues 292–309 (WVQAHSRRVLPPCAQMAS).

It belongs to the protein kinase superfamily. Ser/Thr protein kinase family. Aurora subfamily. Component of the chromosomal passenger complex (CPC) composed of at least BIRC5/survivin, CDCA8/borealin, INCENP, AURKB or AURKC; predominantly independent AURKB- and AURKC-containing complexes exist; in the complex interacts directly with BIRC5/survivin and INCENP. Interacts with TACC1. As to expression, isoform 1 and isoform 2 are expressed in testis. Elevated expression levels were seen only in a subset of cancer cell lines such as Hep-G2, Huh-7 and HeLa. Expression is maximum at M phase.

It is found in the nucleus. The protein resides in the chromosome. The protein localises to the centromere. It localises to the cytoplasm. Its subcellular location is the cytoskeleton. It is found in the spindle. The catalysed reaction is L-seryl-[protein] + ATP = O-phospho-L-seryl-[protein] + ADP + H(+). The enzyme catalyses L-threonyl-[protein] + ATP = O-phospho-L-threonyl-[protein] + ADP + H(+). With respect to regulation, okadaic acid, an inhibitor of protein phosphatase 1 (PP1), protein phosphatase 2A (PP2A) and protein phosphatase 5 (PP5), increases AURKC activity. AURKC is also stabilized through its interaction with INCENP, which also acts as an activator. In terms of biological role, serine/threonine-protein kinase component of the chromosomal passenger complex (CPC), a complex that acts as a key regulator of mitosis. The CPC complex has essential functions at the centromere in ensuring correct chromosome alignment and segregation and is required for chromatin-induced microtubule stabilization and spindle assembly. Also plays a role in meiosis and more particularly in spermatogenesis. Has redundant cellular functions with AURKB and can rescue an AURKB knockdown. Like AURKB, AURKC phosphorylates histone H3 at 'Ser-10' and 'Ser-28'. AURKC phosphorylates the CPC complex subunits BIRC5/survivin and INCENP leading to increased AURKC activity. Phosphorylates TACC1, another protein involved in cell division, at 'Ser-228'. This Homo sapiens (Human) protein is Aurora kinase C (AURKC).